The sequence spans 623 residues: GATA zinc finger domain-containing protein 6 (623 aa).

Disordered stretches follow at residues 137 to 156 (IISPPQQSQQPPPPTSGNNF), 167 to 197 (INNNSNNNNNNNNCKSYKKQQTSKGSATAST), and 245 to 289 (PTTT…TAST). A compositionally biased stretch (low complexity) spans 167–179 (INNNSNNNNNNNN). Over residues 185-197 (KQQTSKGSATAST) the composition is skewed to polar residues. A GATA-type zinc finger spans residues 320–345 (CHSCGETQTSQWRRGPDGCKSLCNAC). Residues 398 to 509 (IQQQQQKDDH…SINHNDKLIN (112 aa)) are disordered. A compositionally biased stretch (low complexity) spans 410 to 482 (LSRPSSFSSQ…TSPTISSESL (73 aa)). The span at 483–502 (NFSSATNTPTNLSPNLQSIN) shows a compositional bias: polar residues.

This Dictyostelium discoideum (Social amoeba) protein is GATA zinc finger domain-containing protein 6 (gtaF).